The primary structure comprises 295 residues: Fructose-bisphosphate aldolase class 1 (295 aa).

Residue E176 is the Proton acceptor of the active site. The active-site Schiff-base intermediate with dihydroxyacetone-P is K213.

Belongs to the class I fructose-bisphosphate aldolase family.

The enzyme catalyses beta-D-fructose 1,6-bisphosphate = D-glyceraldehyde 3-phosphate + dihydroxyacetone phosphate. It functions in the pathway carbohydrate degradation; glycolysis; D-glyceraldehyde 3-phosphate and glycerone phosphate from D-glucose: step 4/4. In Fusobacterium nucleatum subsp. nucleatum (strain ATCC 25586 / DSM 15643 / BCRC 10681 / CIP 101130 / JCM 8532 / KCTC 2640 / LMG 13131 / VPI 4355), this protein is Fructose-bisphosphate aldolase class 1.